The following is a 668-amino-acid chain: DNA ligase (668 aa).

Residues 37 to 41 (DAVYD), 86 to 87 (SM), and E116 each bind NAD(+). K118 acts as the N6-AMP-lysine intermediate in catalysis. Positions 139, 173, 288, and 312 each coordinate NAD(+). Zn(2+) is bound by residues C406, C409, C424, and C429. Positions 590-668 (APDNFFKEKT…EQEAIAKIEK (79 aa)) constitute a BRCT domain.

It belongs to the NAD-dependent DNA ligase family. LigA subfamily. Mg(2+) is required as a cofactor. The cofactor is Mn(2+).

It carries out the reaction NAD(+) + (deoxyribonucleotide)n-3'-hydroxyl + 5'-phospho-(deoxyribonucleotide)m = (deoxyribonucleotide)n+m + AMP + beta-nicotinamide D-nucleotide.. Its function is as follows. DNA ligase that catalyzes the formation of phosphodiester linkages between 5'-phosphoryl and 3'-hydroxyl groups in double-stranded DNA using NAD as a coenzyme and as the energy source for the reaction. It is essential for DNA replication and repair of damaged DNA. This is DNA ligase from Lactobacillus gasseri (strain ATCC 33323 / DSM 20243 / BCRC 14619 / CIP 102991 / JCM 1131 / KCTC 3163 / NCIMB 11718 / NCTC 13722 / AM63).